Reading from the N-terminus, the 1086-residue chain is NAD(P) transhydrogenase, mitochondrial (1086 aa).

A mitochondrion-targeting transit peptide spans 1–43 (MANLLKTVVTGCSCPFLSNLGSCKVLPGKKNFLRTFHTHRILW). At 44–474 (CSAPVKPGIP…TITPFRKTMT (431 aa)) the chain is on the mitochondrial matrix side. The residue at position 70 (Lys-70) is an N6-acetyllysine. Residue Lys-117 is modified to N6-succinyllysine. Residue 182-184 (RVT) coordinates NAD(+). Lys-224 is modified (N6-succinyllysine). Residues Val-237, 257 to 259 (DTR), and Gly-287 each bind NAD(+). N6-succinyllysine is present on Lys-294. NAD(+) is bound by residues Glu-300 and Leu-319. An N6-succinyllysine modification is found at Lys-331. Lys-397 carries the N6-acetyllysine modification. 4 helical membrane-spanning segments follow: residues 475–493 (SASV…GIAA), 501–521 (MVTT…GVTP), 527–546 (LMSV…LVLM), and 558–578 (GLAA…FLVT). The Mitochondrial matrix portion of the chain corresponds to 579-595 (QRMLDMFKRPTDPPEYN). The next 5 membrane-spanning stretches (helical) occupy residues 596 to 616 (YLYL…LYSG), 622 to 642 (IMYL…STQG), 646 to 666 (LGNA…LGGL), 672 to 691 (LLAQ…LTIA), and 702 to 722 (LVAA…IAEY). At 723-739 (IIEYPHFATDAAANLTK) the chain is on the cytoplasmic side. The next 5 helical transmembrane spans lie at 740-760 (IVAY…LVAY), 778-797 (HLLN…PFMM), 801-819 (FTTG…AVMG), 833-853 (VVIT…GFLL), and 857-879 (LLTI…MCVA). At 880 to 1086 (MNRSLANVIL…QAKVRESYQK (207 aa)) the chain is on the mitochondrial matrix side. Residues Tyr-933, 965-970 (VAGRMP), 1009-1011 (NDT), 1026-1027 (GM), 1042-1049 (KRSLGVGY), and 1068-1069 (DA) each bind NADP(+). Position 1079 is an N6-succinyllysine (Lys-1079).

The protein in the N-terminal section; belongs to the AlaDH/PNT family. In the C-terminal section; belongs to the PNT beta subunit family. Homodimer.

The protein resides in the mitochondrion inner membrane. It catalyses the reaction NAD(+) + NADPH + H(+)(in) = NADH + NADP(+) + H(+)(out). In terms of biological role, the transhydrogenation between NADH and NADP is coupled to respiration and ATP hydrolysis and functions as a proton pump across the membrane. May play a role in reactive oxygen species (ROS) detoxification in the adrenal gland. The chain is NAD(P) transhydrogenase, mitochondrial (NNT) from Bos taurus (Bovine).